A 611-amino-acid polypeptide reads, in one-letter code: Ankyrin repeat protein SKIP35 (611 aa).

6 ANK repeats span residues 292–322, 323–353, 356–384, 385–414, 416–442, and 445–478; these read LFSNSFDPGWASGMSATVIQGLLGMLVEGGA, DNVNQCFLEASRFGSTELVRVLLQIAQRNSL, DVDLALGFASHYCKIGTMKCLVEEGNAIA, FLGPLMRAAERGCMQVVQWFVKRGCRDMEL, LALTAATSSCQVEVAAYLLPRVPPPVL, and LSIEILKAAGERSGGSLQGVEFLLKSDFLGDSTA.

In terms of assembly, interacts with SKP1A/ASK1.

This Arabidopsis thaliana (Mouse-ear cress) protein is Ankyrin repeat protein SKIP35 (SKIP35).